Consider the following 322-residue polypeptide: Putative integrase ORF3 (322 aa).

The Integrase catalytic domain occupies 153–322; it reads RGKLTDFKSI…SSKEMFLQNI (170 aa).

Belongs to the plectrovirus integrase ORF3 family.

Its function is as follows. This protein may encode an integrase, which is necessary for integration of the viral DNA into host genome. The polypeptide is Putative integrase ORF3 (Spiroplasma virus SpV1-R8A2 B (SpV1)).